We begin with the raw amino-acid sequence, 458 residues long: UDP-N-acetylmuramate--L-alanine ligase (458 aa).

119-125 (GTHGKTT) contacts ATP.

This sequence belongs to the MurCDEF family.

The protein resides in the cytoplasm. The catalysed reaction is UDP-N-acetyl-alpha-D-muramate + L-alanine + ATP = UDP-N-acetyl-alpha-D-muramoyl-L-alanine + ADP + phosphate + H(+). Its pathway is cell wall biogenesis; peptidoglycan biosynthesis. Its function is as follows. Cell wall formation. This chain is UDP-N-acetylmuramate--L-alanine ligase, found in Phocaeicola vulgatus (strain ATCC 8482 / DSM 1447 / JCM 5826 / CCUG 4940 / NBRC 14291 / NCTC 11154) (Bacteroides vulgatus).